Consider the following 350-residue polypeptide: Secreted effector protein PipB2 (350 aa).

Pentapeptide repeat domains follow at residues Ala162 to Gly201, Thr202 to Gly241, Cys247 to Gly286, and Ala287 to Asp326.

Interacts with the host kinesin light chain (KLC), a subunit of the kinesin-1 motor complex.

It localises to the secreted. It is found in the host membrane. In terms of biological role, effector proteins function to alter host cell physiology and promote bacterial survival in host tissues. Involved in the reorganization of late endosome/lysosome (LE/Lys) compartments in mammalian cells. Necessary and sufficient to link kinesin-1 onto the Salmonella-containing vacuole (SCV) membrane. Required for centrifugal extension of lysosomal glycoprotein-rich membrane tubules, known as Salmonella-induced filaments (Sifs), away from the SCV and toward the cell periphery. Required for virulence, but not for intracellular survival and replication in phagocytic cells. The polypeptide is Secreted effector protein PipB2 (pipB2) (Salmonella typhimurium (strain LT2 / SGSC1412 / ATCC 700720)).